The following is a 339-amino-acid chain: DNA-directed RNA polymerase subunit alpha (339 aa).

Positions 1–233 (MVREEVAGST…DLFLPFLHAE (233 aa)) are alpha N-terminal domain (alpha-NTD). Residues 264-339 (KKGIPLNYIF…IDLLKNKLSF (76 aa)) form an alpha C-terminal domain (alpha-CTD) region.

This sequence belongs to the RNA polymerase alpha chain family. In plastids the minimal PEP RNA polymerase catalytic core is composed of four subunits: alpha, beta, beta', and beta''. When a (nuclear-encoded) sigma factor is associated with the core the holoenzyme is formed, which can initiate transcription.

It is found in the plastid. The protein resides in the chloroplast. It carries out the reaction RNA(n) + a ribonucleoside 5'-triphosphate = RNA(n+1) + diphosphate. Its function is as follows. DNA-dependent RNA polymerase catalyzes the transcription of DNA into RNA using the four ribonucleoside triphosphates as substrates. The protein is DNA-directed RNA polymerase subunit alpha of Psathyrostachys rupestris (Hordeum rupestre).